A 388-amino-acid chain; its full sequence is Ribosomal RNA large subunit methyltransferase F (388 aa).

The span at 1 to 22 shows a compositional bias: polar residues; the sequence is MKTNNHNAKQAQTKTAKSNPSK. Residues 1–51 form a disordered region; the sequence is MKTNNHNAKQAQTKTAKSNPSKEVTKIKPKRVKNKPTAKAAKSTGLKTNAA. The segment covering 27 to 36 has biased composition (basic residues); that stretch reads IKPKRVKNKP.

The protein belongs to the methyltransferase superfamily. METTL16/RlmF family.

It is found in the cytoplasm. The enzyme catalyses adenosine(1618) in 23S rRNA + S-adenosyl-L-methionine = N(6)-methyladenosine(1618) in 23S rRNA + S-adenosyl-L-homocysteine + H(+). Its function is as follows. Specifically methylates the adenine in position 1618 of 23S rRNA. The polypeptide is Ribosomal RNA large subunit methyltransferase F (Vibrio campbellii (strain ATCC BAA-1116)).